We begin with the raw amino-acid sequence, 122 residues long: Large ribosomal subunit protein uL14 (122 aa).

This sequence belongs to the universal ribosomal protein uL14 family. In terms of assembly, part of the 50S ribosomal subunit. Forms a cluster with proteins L3 and L19. In the 70S ribosome, L14 and L19 interact and together make contacts with the 16S rRNA in bridges B5 and B8.

In terms of biological role, binds to 23S rRNA. Forms part of two intersubunit bridges in the 70S ribosome. In Cellvibrio japonicus (strain Ueda107) (Pseudomonas fluorescens subsp. cellulosa), this protein is Large ribosomal subunit protein uL14.